We begin with the raw amino-acid sequence, 179 residues long: Acireductone dioxygenase (179 aa).

The span at 1–12 (MVEAWYMDDSEE) shows a compositional bias: acidic residues. Positions 1–21 (MVEAWYMDDSEEDQRRPHRLE) are disordered. Residues H88, H90, E94, and H133 each contribute to the Fe(2+) site. Ni(2+)-binding residues include H88, H90, E94, and H133.

The protein belongs to the acireductone dioxygenase (ARD) family. As to quaternary structure, monomer. Interacts with MMP14. Fe(2+) serves as cofactor. The cofactor is Ni(2+).

Its subcellular location is the cytoplasm. The protein localises to the nucleus. It is found in the cell membrane. It catalyses the reaction 1,2-dihydroxy-5-(methylsulfanyl)pent-1-en-3-one + O2 = 4-methylsulfanyl-2-oxobutanoate + formate + 2 H(+). The catalysed reaction is 1,2-dihydroxy-5-(methylsulfanyl)pent-1-en-3-one + O2 = 3-(methylsulfanyl)propanoate + CO + formate + 2 H(+). It participates in amino-acid biosynthesis; L-methionine biosynthesis via salvage pathway; L-methionine from S-methyl-5-thio-alpha-D-ribose 1-phosphate: step 5/6. Its function is as follows. Catalyzes 2 different reactions between oxygen and the acireductone 1,2-dihydroxy-3-keto-5-methylthiopentene (DHK-MTPene) depending upon the metal bound in the active site. Fe-containing acireductone dioxygenase (Fe-ARD) produces formate and 2-keto-4-methylthiobutyrate (KMTB), the alpha-ketoacid precursor of methionine in the methionine recycle pathway. Ni-containing acireductone dioxygenase (Ni-ARD) produces methylthiopropionate, carbon monoxide and formate, and does not lie on the methionine recycle pathway. Also down-regulates cell migration mediated by MMP14. This Monodelphis domestica (Gray short-tailed opossum) protein is Acireductone dioxygenase.